Here is a 648-residue protein sequence, read N- to C-terminus: cAMP-dependent protein kinase catalytic subunit (648 aa).

4 stretches are compositionally biased toward low complexity: residues 1 to 20 (MSNSNNNSSSGNHNSTTINN), 46 to 67 (SGNNTNNNNTNNNNNNNNNSSG), 136 to 175 (QQQPQQQPQQQQPQQQQPQQQQPQQQQQQQPQQQQQPQQQ), and 232 to 254 (NTPSTTQTSTTTTTTTTTTNPHT). 4 disordered regions span residues 1 to 25 (MSNSNNNSSSGNHNSTTINNPKVNV), 40 to 86 (GGGG…TKMD), 121 to 175 (KVPS…PQQQ), and 219 to 290 (QQQQ…DTNP). Positions 255-290 (SGLSLQHAHSSYTPSNVLHSPTHFQSSLPTRLDTNP) are enriched in polar residues. One can recognise a Protein kinase domain in the interval 336–590 (FKQIRVIGTG…ALDVKNHRWF (255 aa)). ATP-binding positions include 342 to 350 (IGTGTFGKV) and K365. D459 (proton acceptor) is an active-site residue. Residue T490 is modified to Phosphothreonine. Positions 591 to 648 (SDINWERLYQRRDNGPFIPKIQHQGDSSNFEMYDEEEMVEEPPSSNYVDPYAHLFKDF) constitute an AGC-kinase C-terminal domain.

It belongs to the protein kinase superfamily. AGC Ser/Thr protein kinase family. cAMP subfamily. In Dictyostelium the holoenzyme is a dimer composed of a regulatory (R) and a catalytic (C) subunit. In the presence of cAMP it dissociates into the active C subunit and an R monomer.

The enzyme catalyses L-seryl-[protein] + ATP = O-phospho-L-seryl-[protein] + ADP + H(+). It catalyses the reaction L-threonyl-[protein] + ATP = O-phospho-L-threonyl-[protein] + ADP + H(+). Functionally, essential for differentiation and fruit morphogenesis. In Dictyostelium discoideum (Social amoeba), this protein is cAMP-dependent protein kinase catalytic subunit (pkaC).